The following is a 231-amino-acid chain: Deoxyribose-phosphate aldolase (231 aa).

The Proton donor/acceptor role is filled by aspartate 86. The active-site Schiff-base intermediate with acetaldehyde is the lysine 147. Lysine 172 serves as the catalytic Proton donor/acceptor. Residues 206-231 (WQAETAGETVTEPESDRDGADTTDGY) form a disordered region.

The protein belongs to the DeoC/FbaB aldolase family. DeoC type 1 subfamily.

It localises to the cytoplasm. The catalysed reaction is 2-deoxy-D-ribose 5-phosphate = D-glyceraldehyde 3-phosphate + acetaldehyde. Its pathway is carbohydrate degradation; 2-deoxy-D-ribose 1-phosphate degradation; D-glyceraldehyde 3-phosphate and acetaldehyde from 2-deoxy-alpha-D-ribose 1-phosphate: step 2/2. Functionally, catalyzes a reversible aldol reaction between acetaldehyde and D-glyceraldehyde 3-phosphate to generate 2-deoxy-D-ribose 5-phosphate. In Haloarcula marismortui (strain ATCC 43049 / DSM 3752 / JCM 8966 / VKM B-1809) (Halobacterium marismortui), this protein is Deoxyribose-phosphate aldolase.